The following is a 498-amino-acid chain: Protein flp (498 aa).

The next 4 membrane-spanning stretches (helical) occupy residues 6–26 (LYFL…IYIT), 389–409 (FNIV…FSAY), 433–453 (LSLC…YLIL), and 471–491 (LALI…LLFL).

The protein resides in the cell membrane. Functionally, its precise function is unknown. Has no penicillin-binding activity and is not involved in methicillin resistance. The chain is Protein flp (flp) from Staphylococcus aureus (strain NCTC 8325 / PS 47).